Consider the following 329-residue polypeptide: Protein SPATA31F3 (329 aa).

Residues 11-31 (VGYSVYTYGSIFIIALIIWQV) traverse the membrane as a helical segment. A coiled-coil region spans residues 58 to 85 (SDRATRAKRTSKEEAEKLQKLLDTMKSQ). Disordered regions lie at residues 149–184 (ADRS…RSAT), 201–250 (QQLD…AAPT), and 288–329 (KPMT…KRNI). Phosphoserine occurs at positions 152 and 153. Composition is skewed to polar residues over residues 154–184 (ELTY…RSAT) and 201–223 (QQLD…SSTD). Residues 232–242 (QKKRKKTKKLA) show a composition bias toward basic residues. The span at 293–320 (EPEKTHSPVRDQAEGAEKKKKPECDLKA) shows a compositional bias: basic and acidic residues.

Belongs to the SPATA31 family.

The protein resides in the membrane. The sequence is that of Protein SPATA31F3 from Rattus norvegicus (Rat).